The sequence spans 399 residues: Elongation factor Tu (399 aa).

The tr-type G domain maps to 10–204 (KPHVNIGTIG…AVDANIPEPE (195 aa)). Residues 19 to 26 (GHVDHGKT) form a G1 region. A GTP-binding site is contributed by 19-26 (GHVDHGKT). T26 lines the Mg(2+) pocket. Positions 60–64 (GITIN) are G2. The interval 81-84 (DCPG) is G3. Residues 81–85 (DCPGH) and 136–139 (NKCD) contribute to the GTP site. Residues 136–139 (NKCD) form a G4 region. A G5 region spans residues 174-176 (SGL).

Belongs to the TRAFAC class translation factor GTPase superfamily. Classic translation factor GTPase family. EF-Tu/EF-1A subfamily. In terms of assembly, monomer.

It localises to the cytoplasm. The catalysed reaction is GTP + H2O = GDP + phosphate + H(+). GTP hydrolase that promotes the GTP-dependent binding of aminoacyl-tRNA to the A-site of ribosomes during protein biosynthesis. The polypeptide is Elongation factor Tu (Synechococcus sp. (strain WH7803)).